The primary structure comprises 307 residues: Dihydroorotate dehydrogenase B (NAD(+)), catalytic subunit (307 aa).

Residues Ser21 and 45–46 (KA) each bind FMN. Substrate is bound by residues Lys45 and 69-73 (NAIGL). Asn101 and Asn129 together coordinate FMN. Asn129 serves as a coordination point for substrate. Catalysis depends on Cys132, which acts as the Nucleophile. Residues Lys167 and Ile193 each coordinate FMN. 194–195 (NT) contributes to the substrate binding site. Residues Gly219, 245–246 (GG), and 267–268 (GT) contribute to the FMN site.

The protein belongs to the dihydroorotate dehydrogenase family. Type 1 subfamily. In terms of assembly, heterotetramer of 2 PyrK and 2 PyrD type B subunits. FMN serves as cofactor.

The protein localises to the cytoplasm. It catalyses the reaction (S)-dihydroorotate + NAD(+) = orotate + NADH + H(+). It participates in pyrimidine metabolism; UMP biosynthesis via de novo pathway; orotate from (S)-dihydroorotate (NAD(+) route): step 1/1. Functionally, catalyzes the conversion of dihydroorotate to orotate with NAD(+) as electron acceptor. The sequence is that of Dihydroorotate dehydrogenase B (NAD(+)), catalytic subunit (pyrD) from Cutibacterium acnes (strain DSM 16379 / KPA171202) (Propionibacterium acnes).